The following is a 95-amino-acid chain: Acylphosphatase (95 aa).

Residues 8–95 (RAKILVRGKV…GNFRTFEIKK (88 aa)) form the Acylphosphatase-like domain. Catalysis depends on residues Arg-23 and Asn-41.

It belongs to the acylphosphatase family.

The catalysed reaction is an acyl phosphate + H2O = a carboxylate + phosphate + H(+). The protein is Acylphosphatase (acyP) of Leptospira interrogans serogroup Icterohaemorrhagiae serovar copenhageni (strain Fiocruz L1-130).